A 422-amino-acid chain; its full sequence is Replication factor C large subunit (422 aa).

63–70 (GPPGIGKT) lines the ATP pocket.

This sequence belongs to the activator 1 small subunits family. RfcL subfamily. Heteromultimer composed of small subunits (RfcS) and large subunits (RfcL).

In terms of biological role, part of the RFC clamp loader complex which loads the PCNA sliding clamp onto DNA. The sequence is that of Replication factor C large subunit from Pyrobaculum neutrophilum (strain DSM 2338 / JCM 9278 / NBRC 100436 / V24Sta) (Thermoproteus neutrophilus).